The sequence spans 100 residues: MELTPREKDKLLIFTAGLLAERRKARGLKLNYPEAVAFITCAILEGARDGRSVAELMSYGATLLSREDVMDGIAEMIPEIQVEATFPDGTKLVTVHNPIV.

Belongs to the urease gamma subunit family. In terms of assembly, heterotrimer of UreA (gamma), UreB (beta) and UreC (alpha) subunits. Three heterotrimers associate to form the active enzyme.

It is found in the cytoplasm. It catalyses the reaction urea + 2 H2O + H(+) = hydrogencarbonate + 2 NH4(+). Its pathway is nitrogen metabolism; urea degradation; CO(2) and NH(3) from urea (urease route): step 1/1. The chain is Urease subunit gamma from Azoarcus sp. (strain BH72).